The following is a 377-amino-acid chain: Citrate synthase (377 aa).

Residues His258 and Asp313 contribute to the active site.

This sequence belongs to the citrate synthase family. In terms of assembly, homodimer. In terms of processing, the N-terminus is blocked by acetylation.

The catalysed reaction is oxaloacetate + acetyl-CoA + H2O = citrate + CoA + H(+). It functions in the pathway carbohydrate metabolism; tricarboxylic acid cycle; isocitrate from oxaloacetate: step 1/2. Its activity is regulated as follows. Allosterically inhibited by NADH. The protein is Citrate synthase (gltA) of Saccharolobus solfataricus (strain ATCC 35092 / DSM 1617 / JCM 11322 / P2) (Sulfolobus solfataricus).